The chain runs to 263 residues: Type-2Bb cytolytic delta-endotoxin (263 aa).

Belongs to the cyt1/cyt2 endotoxin family. In terms of processing, active after proteolytic processing.

In terms of biological role, kills the larvae of dipteran insects by making pores in the epithelial cell membrane of the insect midgut. This is Type-2Bb cytolytic delta-endotoxin (cyt2Bb1) from Bacillus thuringiensis subsp. jegathesan.